The chain runs to 711 residues: 1,4-alpha-glucan-branching enzyme (711 aa).

(1,4-alpha-D-glucosyl)n contacts are provided by tryptophan 98 and lysine 135. Catalysis depends on aspartate 353, which acts as the Nucleophile. The Proton donor role is filled by glutamate 414.

It belongs to the glycosyl hydrolase 13 family. GlgB subfamily.

It is found in the cytoplasm. It carries out the reaction Transfers a segment of a (1-&gt;4)-alpha-D-glucan chain to a primary hydroxy group in a similar glucan chain.. It participates in glycan biosynthesis; glycogen biosynthesis. Its function is as follows. Glycogen-branching enzyme participates in the glycogen biosynthetic process along with glycogenin and glycogen synthase. Generates alpha-1,6-glucosidic branches from alpha-1,4-linked glucose chains, to increase solubility of the glycogen polymer. The protein is 1,4-alpha-glucan-branching enzyme (GLC3) of Debaryomyces hansenii (strain ATCC 36239 / CBS 767 / BCRC 21394 / JCM 1990 / NBRC 0083 / IGC 2968) (Yeast).